The chain runs to 349 residues: UDP-3-O-acylglucosamine N-acyltransferase (349 aa).

The Proton acceptor role is filled by histidine 246.

Belongs to the transferase hexapeptide repeat family. LpxD subfamily. In terms of assembly, homotrimer.

It catalyses the reaction a UDP-3-O-[(3R)-3-hydroxyacyl]-alpha-D-glucosamine + a (3R)-hydroxyacyl-[ACP] = a UDP-2-N,3-O-bis[(3R)-3-hydroxyacyl]-alpha-D-glucosamine + holo-[ACP] + H(+). Its pathway is bacterial outer membrane biogenesis; LPS lipid A biosynthesis. Functionally, catalyzes the N-acylation of UDP-3-O-acylglucosamine using 3-hydroxyacyl-ACP as the acyl donor. Is involved in the biosynthesis of lipid A, a phosphorylated glycolipid that anchors the lipopolysaccharide to the outer membrane of the cell. The chain is UDP-3-O-acylglucosamine N-acyltransferase from Nostoc sp. (strain PCC 7120 / SAG 25.82 / UTEX 2576).